Here is an 89-residue protein sequence, read N- to C-terminus: Cell division topological specificity factor (89 aa).

The protein belongs to the MinE family.

In terms of biological role, prevents the cell division inhibition by proteins MinC and MinD at internal division sites while permitting inhibition at polar sites. This ensures cell division at the proper site by restricting the formation of a division septum at the midpoint of the long axis of the cell. The chain is Cell division topological specificity factor from Brucella anthropi (strain ATCC 49188 / DSM 6882 / CCUG 24695 / JCM 21032 / LMG 3331 / NBRC 15819 / NCTC 12168 / Alc 37) (Ochrobactrum anthropi).